Here is a 212-residue protein sequence, read N- to C-terminus: Uracil phosphoribosyltransferase (212 aa).

Residues arginine 78, arginine 103, and 130–138 each bind 5-phospho-alpha-D-ribose 1-diphosphate; that span reads DPMLATGGS. Uracil-binding positions include isoleucine 193 and 198–200; that span reads GDA. Residue aspartate 199 coordinates 5-phospho-alpha-D-ribose 1-diphosphate.

It belongs to the UPRTase family. Requires Mg(2+) as cofactor.

The enzyme catalyses UMP + diphosphate = 5-phospho-alpha-D-ribose 1-diphosphate + uracil. The protein operates within pyrimidine metabolism; UMP biosynthesis via salvage pathway; UMP from uracil: step 1/1. Allosterically activated by GTP. Functionally, catalyzes the conversion of uracil and 5-phospho-alpha-D-ribose 1-diphosphate (PRPP) to UMP and diphosphate. The protein is Uracil phosphoribosyltransferase of Bordetella avium (strain 197N).